The sequence spans 245 residues: MIIPAIDLIEGQVVRLYQGDYNQKTTFNLSPLEQLQSYQEQGADLLHIVDLTGAKDPMKRQTQLIASLVRELDTPIQVGGGVRTEAQLSELLEIGVSRVVIGSLAVKEPELVKSWFVKYGSDAICLALDVNINDQGEKIVAVSGWQSGGGKTLESLVAEFSTVGLKHALVTDISRDGTLKGANTELYQEISTAYPEINWQASGGIATLADVNAVKESGANGIIIGKALLINQFTVEEAITCWPNA.

D7 (proton acceptor) is an active-site residue. D129 serves as the catalytic Proton donor.

This sequence belongs to the HisA/HisF family.

The protein resides in the cytoplasm. The catalysed reaction is 1-(5-phospho-beta-D-ribosyl)-5-[(5-phospho-beta-D-ribosylamino)methylideneamino]imidazole-4-carboxamide = 5-[(5-phospho-1-deoxy-D-ribulos-1-ylimino)methylamino]-1-(5-phospho-beta-D-ribosyl)imidazole-4-carboxamide. The protein operates within amino-acid biosynthesis; L-histidine biosynthesis; L-histidine from 5-phospho-alpha-D-ribose 1-diphosphate: step 4/9. This is 1-(5-phosphoribosyl)-5-[(5-phosphoribosylamino)methylideneamino] imidazole-4-carboxamide isomerase from Shewanella piezotolerans (strain WP3 / JCM 13877).